The following is a 347-amino-acid chain: UDP-3-O-acylglucosamine N-acyltransferase (347 aa).

The Proton acceptor role is filled by histidine 242.

It belongs to the transferase hexapeptide repeat family. LpxD subfamily. In terms of assembly, homotrimer.

It carries out the reaction a UDP-3-O-[(3R)-3-hydroxyacyl]-alpha-D-glucosamine + a (3R)-hydroxyacyl-[ACP] = a UDP-2-N,3-O-bis[(3R)-3-hydroxyacyl]-alpha-D-glucosamine + holo-[ACP] + H(+). It participates in bacterial outer membrane biogenesis; LPS lipid A biosynthesis. In terms of biological role, catalyzes the N-acylation of UDP-3-O-acylglucosamine using 3-hydroxyacyl-ACP as the acyl donor. Is involved in the biosynthesis of lipid A, a phosphorylated glycolipid that anchors the lipopolysaccharide to the outer membrane of the cell. The protein is UDP-3-O-acylglucosamine N-acyltransferase of Dechloromonas aromatica (strain RCB).